We begin with the raw amino-acid sequence, 441 residues long: Chromosome partition protein MukF (441 aa).

The interval 208–236 (LDETSGNLRELQDTLNAAGDKLQAQLLRI) is leucine-zipper.

Belongs to the MukF family. As to quaternary structure, interacts, and probably forms a ternary complex, with MukE and MukB via its C-terminal region. The complex formation is stimulated by calcium or magnesium. It is required for an interaction between MukE and MukB.

The protein localises to the cytoplasm. It localises to the nucleoid. Functionally, involved in chromosome condensation, segregation and cell cycle progression. May participate in facilitating chromosome segregation by condensation DNA from both sides of a centrally located replisome during cell division. Not required for mini-F plasmid partitioning. Probably acts via its interaction with MukB and MukE. Overexpression results in anucleate cells. It has a calcium binding activity. In Pasteurella multocida (strain Pm70), this protein is Chromosome partition protein MukF.